Here is a 478-residue protein sequence, read N- to C-terminus: Kynureninase (478 aa).

Pyridoxal 5'-phosphate-binding positions include L138, T139, 166–169 (FPSD), D252, H255, and Y277. K278 carries the N6-(pyridoxal phosphate)lysine modification. W315 and N343 together coordinate pyridoxal 5'-phosphate.

It belongs to the kynureninase family. Homodimer. Pyridoxal 5'-phosphate serves as cofactor.

It is found in the cytoplasm. The catalysed reaction is L-kynurenine + H2O = anthranilate + L-alanine + H(+). It carries out the reaction 3-hydroxy-L-kynurenine + H2O = 3-hydroxyanthranilate + L-alanine + H(+). Its pathway is amino-acid degradation; L-kynurenine degradation; L-alanine and anthranilate from L-kynurenine: step 1/1. The protein operates within cofactor biosynthesis; NAD(+) biosynthesis; quinolinate from L-kynurenine: step 2/3. Functionally, catalyzes the cleavage of L-kynurenine (L-Kyn) and L-3-hydroxykynurenine (L-3OHKyn) into anthranilic acid (AA) and 3-hydroxyanthranilic acid (3-OHAA), respectively. The polypeptide is Kynureninase (Coccidioides immitis (strain RS) (Valley fever fungus)).